We begin with the raw amino-acid sequence, 513 residues long: V-type proton ATPase subunit B, kidney isoform (513 aa).

R394 lines the ATP pocket. Positions 510–513 (DTAL) match the PDZ-binding motif.

It belongs to the ATPase alpha/beta chains family. As to quaternary structure, V-ATPase is a heteromultimeric enzyme made up of two complexes: the ATP-hydrolytic V1 complex and the proton translocation V0 complex. The V1 complex consists of three catalytic AB heterodimers that form a heterohexamer, three peripheral stalks each consisting of EG heterodimers, one central rotor including subunits D and F, and the regulatory subunits C and H. The proton translocation complex V0 consists of the proton transport subunit a, a ring of proteolipid subunits c9c'', rotary subunit d, subunits e and f, and the accessory subunits ATP6AP1/Ac45 and ATP6AP2/PRR. Forms a complex with NHERF1 and SCL4A7. In terms of tissue distribution, kidney cortex and medulla.

It is found in the apical cell membrane. The protein localises to the basolateral cell membrane. Its function is as follows. Non-catalytic subunit of the V1 complex of vacuolar(H+)-ATPase (V-ATPase), a multisubunit enzyme composed of a peripheral complex (V1) that hydrolyzes ATP and a membrane integral complex (V0) that translocates protons. V-ATPase is responsible for acidifying and maintaining the pH of intracellular compartments and in some cell types, is targeted to the plasma membrane, where it is responsible for acidifying the extracellular environment. Essential for the proper assembly and activity of V-ATPase. In renal intercalated cells, mediates secretion of protons (H+) into the urine thereby ensuring correct urinary acidification. Required for optimal olfactory function by mediating the acidification of the nasal olfactory epithelium. This is V-type proton ATPase subunit B, kidney isoform (ATP6V1B1) from Bos taurus (Bovine).